Here is a 518-residue protein sequence, read N- to C-terminus: ORC1-type DNA replication protein 7 (518 aa).

ATP is bound at residue Thr94–Ala98. Positions Asp165–Phe196 are disordered. The span at Ser186–Phe196 shows a compositional bias: low complexity. Residues Tyr318 and Arg330 each contribute to the ATP site.

Belongs to the CDC6/cdc18 family.

Functionally, involved in regulation of DNA replication. Required to initiate DNA replication of the circular chromosome at a nearby autonomously replicating sequence (ARS) oriC1. The sequence is that of ORC1-type DNA replication protein 7 (orc7) from Halobacterium salinarum (strain ATCC 700922 / JCM 11081 / NRC-1) (Halobacterium halobium).